Here is a 106-residue protein sequence, read N- to C-terminus: Large ribosomal subunit protein uL24 (106 aa).

The span at 84–97 (EKIGRELGAKEKAR) shows a compositional bias: basic and acidic residues. A disordered region spans residues 84–106 (EKIGRELGAKEKARLQKRKAAAK).

This sequence belongs to the universal ribosomal protein uL24 family. In terms of assembly, part of the 50S ribosomal subunit.

Its function is as follows. One of two assembly initiator proteins, it binds directly to the 5'-end of the 23S rRNA, where it nucleates assembly of the 50S subunit. Functionally, one of the proteins that surrounds the polypeptide exit tunnel on the outside of the subunit. The polypeptide is Large ribosomal subunit protein uL24 (Anaeromyxobacter sp. (strain K)).